The sequence spans 346 residues: Transcription initiation factor TFIID subunit 11 (346 aa).

A Histone-fold domain is found at 131–329; that stretch reads LDKDQTNRFE…RLYRLQSDTL (199 aa). Residues Ser-236 and Ser-238 each carry the phosphoserine modification.

Belongs to the TAF11 family. TAF11 heterodimerizes with TAF13, but they do not seem to form a heterotetramer like TAF6/TAF9. The 1.2 MDa TFIID complex is composed of TATA binding protein (TBP) and the 14 TBP-associated factors (one copy of each TAF1, TAF2, TAF3, TAF7, TAF8, TAF11, TAF13, two copies of each TAF4, TAF5, TAF6, TAF9, TAF10, TAF12, and three copies of TAF14), ranging in size from 17 to 150 kDa.

Its subcellular location is the nucleus. Functions as a component of the DNA-binding general transcription factor complex TFIID. Binding of TFIID to a promoter (with or without TATA element) is the initial step in pre-initiation complex (PIC) formation. TFIID plays a key role in the regulation of gene expression by RNA polymerase II through different activities such as transcription activator interaction, core promoter recognition and selectivity, TFIIA and TFIIB interaction, chromatin modification (histone acetylation by TAF1), facilitation of DNA opening and initiation of transcription. This Saccharomyces cerevisiae (strain ATCC 204508 / S288c) (Baker's yeast) protein is Transcription initiation factor TFIID subunit 11 (TAF11).